The primary structure comprises 339 residues: Phenylalanine--tRNA ligase alpha subunit (339 aa).

Mg(2+) is bound at residue Glu-250.

This sequence belongs to the class-II aminoacyl-tRNA synthetase family. Phe-tRNA synthetase alpha subunit type 1 subfamily. As to quaternary structure, tetramer of two alpha and two beta subunits. The cofactor is Mg(2+).

The protein resides in the cytoplasm. The catalysed reaction is tRNA(Phe) + L-phenylalanine + ATP = L-phenylalanyl-tRNA(Phe) + AMP + diphosphate + H(+). The chain is Phenylalanine--tRNA ligase alpha subunit from Azobacteroides pseudotrichonymphae genomovar. CFP2.